The following is a 238-amino-acid chain: Ribonuclease PH (238 aa).

Phosphate contacts are provided by residues Arg-86 and 124 to 126; that span reads GTR.

It belongs to the RNase PH family. Homohexameric ring arranged as a trimer of dimers.

It carries out the reaction tRNA(n+1) + phosphate = tRNA(n) + a ribonucleoside 5'-diphosphate. Phosphorolytic 3'-5' exoribonuclease that plays an important role in tRNA 3'-end maturation. Removes nucleotide residues following the 3'-CCA terminus of tRNAs; can also add nucleotides to the ends of RNA molecules by using nucleoside diphosphates as substrates, but this may not be physiologically important. Probably plays a role in initiation of 16S rRNA degradation (leading to ribosome degradation) during starvation. This is Ribonuclease PH from Serratia proteamaculans (strain 568).